The following is a 196-amino-acid chain: Holliday junction branch migration complex subunit RuvA (196 aa).

A domain I region spans residues 1–63; sequence MISFVSGRVA…EDSLTLYGFA (63 aa). The tract at residues 64-136 is domain II; sequence DDDERTVFEL…LKDRLGTPST (73 aa). The flexible linker stretch occupies residues 136–140; the sequence is TAAAE. The domain III stretch occupies residues 141 to 196; sequence STSGWRDAVHAGLLNLGYTARQADEAIAAIAGELDDSAAVDTATALRLALATLKRP.

This sequence belongs to the RuvA family. As to quaternary structure, homotetramer. Forms an RuvA(8)-RuvB(12)-Holliday junction (HJ) complex. HJ DNA is sandwiched between 2 RuvA tetramers; dsDNA enters through RuvA and exits via RuvB. An RuvB hexamer assembles on each DNA strand where it exits the tetramer. Each RuvB hexamer is contacted by two RuvA subunits (via domain III) on 2 adjacent RuvB subunits; this complex drives branch migration. In the full resolvosome a probable DNA-RuvA(4)-RuvB(12)-RuvC(2) complex forms which resolves the HJ.

It is found in the cytoplasm. In terms of biological role, the RuvA-RuvB-RuvC complex processes Holliday junction (HJ) DNA during genetic recombination and DNA repair, while the RuvA-RuvB complex plays an important role in the rescue of blocked DNA replication forks via replication fork reversal (RFR). RuvA specifically binds to HJ cruciform DNA, conferring on it an open structure. The RuvB hexamer acts as an ATP-dependent pump, pulling dsDNA into and through the RuvAB complex. HJ branch migration allows RuvC to scan DNA until it finds its consensus sequence, where it cleaves and resolves the cruciform DNA. This is Holliday junction branch migration complex subunit RuvA from Acidothermus cellulolyticus (strain ATCC 43068 / DSM 8971 / 11B).